Here is a 1379-residue protein sequence, read N- to C-terminus: DNA-directed RNA polymerase subunit beta (1379 aa).

The protein belongs to the RNA polymerase beta chain family. In terms of assembly, in plastids the minimal PEP RNA polymerase catalytic core is composed of four subunits: alpha, beta, beta', and beta''. When a (nuclear-encoded) sigma factor is associated with the core the holoenzyme is formed, which can initiate transcription.

Its subcellular location is the plastid. It localises to the chloroplast. The catalysed reaction is RNA(n) + a ribonucleoside 5'-triphosphate = RNA(n+1) + diphosphate. Functionally, DNA-dependent RNA polymerase catalyzes the transcription of DNA into RNA using the four ribonucleoside triphosphates as substrates. The sequence is that of DNA-directed RNA polymerase subunit beta from Trieres chinensis (Marine centric diatom).